A 259-amino-acid polypeptide reads, in one-letter code: Small ribosomal subunit protein uS7m (259 aa).

A mitochondrion-targeting transit peptide spans 1 to 39 (MLRLIKQPLFRCASSGHLMKESLVFIHQTRTFQVGKFTS). At Thr157 the chain carries Phosphothreonine.

Belongs to the universal ribosomal protein uS7 family. In terms of assembly, component of the mitochondrial small ribosomal subunit (mt-SSU). Mature yeast 74S mitochondrial ribosomes consist of a small (37S) and a large (54S) subunit. The 37S small subunit contains a 15S ribosomal RNA (15S mt-rRNA) and at least 32 different proteins. The 54S large subunit contains a 21S rRNA (21S mt-rRNA) and at least 45 different proteins.

It localises to the mitochondrion. Functionally, component of the mitochondrial ribosome (mitoribosome), a dedicated translation machinery responsible for the synthesis of mitochondrial genome-encoded proteins, including at least some of the essential transmembrane subunits of the mitochondrial respiratory chain. The mitoribosomes are attached to the mitochondrial inner membrane and translation products are cotranslationally integrated into the membrane. The chain is Small ribosomal subunit protein uS7m (rsm7) from Schizosaccharomyces pombe (strain 972 / ATCC 24843) (Fission yeast).